Here is a 241-residue protein sequence, read N- to C-terminus: Thiamine import ATP-binding protein ThiQ (241 aa).

Positions 2–239 (IQLDKLNHCY…PKDEVLIQYL (238 aa)) constitute an ABC transporter domain. 41 to 48 (GPSGAGKS) is an ATP binding site.

Belongs to the ABC transporter superfamily. Thiamine importer (TC 3.A.1.19.1) family. The complex is composed of two ATP-binding proteins (ThiQ), two transmembrane proteins (ThiP) and a solute-binding protein (ThiB).

The protein localises to the cell inner membrane. The enzyme catalyses thiamine(out) + ATP + H2O = thiamine(in) + ADP + phosphate + H(+). Part of the ABC transporter complex ThiBPQ involved in thiamine import. Responsible for energy coupling to the transport system. The protein is Thiamine import ATP-binding protein ThiQ of Photobacterium profundum (strain SS9).